We begin with the raw amino-acid sequence, 830 residues long: Probable mixed-linked glucan synthase 7 (830 aa).

Transmembrane regions (helical) follow at residues 61–81 and 98–118; these read LTIFVRIAIFVLFFKWRITYA and AATFWTASIAGELWFAFMWVL. Residue aspartate 186 is part of the active site. Residues 251–279 adopt a coiled-coil conformation; the sequence is ELVRDRRRVRREYEEMRLRIDALQAADAR. The substrate site is built by aspartate 367 and aspartate 369. Aspartate 529 is a catalytic residue. The next 6 helical transmembrane spans lie at 613–633, 638–658, 676–696, 735–755, 776–796, and 805–825; these read LFLMAYCLFPAIPLIAGGGGW, TPTYVAFLAALMVTLAAVAVL, FWMVSATSAYLAAVAQVALKV, ALMAPTAAALAVNVASMAAAG, LPVAFNVWVVVHLYPFALGLM, and PILFLFAVVAYLAVRFLCLLL.

Belongs to the glycosyltransferase 2 family. Plant cellulose synthase-like F subfamily. In terms of tissue distribution, expressed in mature pollen.

Its subcellular location is the golgi apparatus membrane. In terms of biological role, may catalyze both beta-1,3 and beta-1,4 glycosidic linkage on beta-D-glucan. Essential for (1,3;1,4)-beta-D-glucans synthesis in grasses and cereals (Poaceae). The mixed-linked glucans (which are not present in walls of dicotyledons or most other monocotyledonous plants) are particularly important constituents of the walls of the starchy endosperm and aleurone cells of cereal grains such as oats, wheat, rice and barley. They can account for up to 70% by weight of the wall. The polypeptide is Probable mixed-linked glucan synthase 7 (CSLF7) (Oryza sativa subsp. japonica (Rice)).